The primary structure comprises 324 residues: MTQQPQADAPLAGRHIAVLLGGPSSERKVSLVSGAACAEALERLGAKVSRIDPGPDVAQVLAATKPDMVFNALHGEWGEDGCVQGVLETLKLPYTHSGVLASALAMDKAKAKAVLAAAGVTVPGGGLFNRHDVARDHVLQPPYVVKPNAEGSSVGVFIIKEGANRPPEEVGAPSWTFGEEVMVEPYIQGMELAVAVLGESNGPRALAVTDIRASTGFYDYEAKYSEGGSIHVLPAPIPNAVRDRAMRMAELAHTALGCRGVTRSDFRYDDINDLLVLLEVNTQPGMTPTSLAPEQADHVGIPFDQLVLWIVEDAYARCSAGGTA.

Positions 112 to 312 (KAVLAAAGVT…FDQLVLWIVE (201 aa)) constitute an ATP-grasp domain. ATP is bound at residue 139 to 193 (LQPPYVVKPNAEGSSVGVFIIKEGANRPPEEVGAPSWTFGEEVMVEPYIQGMELA). Mg(2+)-binding residues include aspartate 265, glutamate 279, and asparagine 281.

Belongs to the D-alanine--D-alanine ligase family. The cofactor is Mg(2+). Mn(2+) is required as a cofactor.

It is found in the cytoplasm. The enzyme catalyses 2 D-alanine + ATP = D-alanyl-D-alanine + ADP + phosphate + H(+). Its pathway is cell wall biogenesis; peptidoglycan biosynthesis. In terms of biological role, cell wall formation. This Caulobacter vibrioides (strain ATCC 19089 / CIP 103742 / CB 15) (Caulobacter crescentus) protein is D-alanine--D-alanine ligase.